The primary structure comprises 255 residues: Endonuclease 8 2 (255 aa).

The active-site Schiff-base intermediate with DNA is the Pro2. The active-site Proton donor is the Glu3. Catalysis depends on Lys51, which acts as the Proton donor; for beta-elimination activity. Residues Gln67 and Asn164 each coordinate DNA. The FPG-type zinc finger occupies 221–255 (WVYGRAGQGCRRCGTLIAYDTTDERVRYWCPACQR). The active-site Proton donor; for delta-elimination activity is Arg245.

Belongs to the FPG family. It depends on Zn(2+) as a cofactor.

The catalysed reaction is 2'-deoxyribonucleotide-(2'-deoxyribose 5'-phosphate)-2'-deoxyribonucleotide-DNA = a 3'-end 2'-deoxyribonucleotide-(2,3-dehydro-2,3-deoxyribose 5'-phosphate)-DNA + a 5'-end 5'-phospho-2'-deoxyribonucleoside-DNA + H(+). Its function is as follows. Involved in base excision repair of DNA damaged by oxidation or by mutagenic agents. Acts as a DNA glycosylase that recognizes and removes damaged bases. Has AP (apurinic/apyrimidinic) lyase activity and introduces nicks in the DNA strand. Cleaves the DNA backbone by beta-delta elimination to generate a single-strand break at the site of the removed base with both 3'- and 5'-phosphates. The sequence is that of Endonuclease 8 2 (nei2) from Mycobacterium bovis (strain ATCC BAA-935 / AF2122/97).